A 320-amino-acid chain; its full sequence is Pyrroline-5-carboxylate reductase 2 (320 aa).

At Ser2 the chain carries N-acetylserine. Residues Ile6 to Leu11 and Ser34 each bind NADP(+). The NADPH site is built by Ala8, Gln10, Leu11, Ser34, Glu36, Asn56, Val70, Lys71, and Ala97. Residues Asn56, Ala69–Pro72, and Cys95–Ala97 contribute to the NADP(+) site. Residue Glu164 participates in L-proline binding. NADPH is bound at residue Asn230. Residues Ala237 and Thr238 each contribute to the L-proline site. Residues Glu293–Glu320 are disordered. Ser304 carries the phosphoserine modification.

It belongs to the pyrroline-5-carboxylate reductase family. In terms of assembly, homodecamer; composed of 5 homodimers. Interacts with LTO1.

The protein resides in the cytoplasm. Its subcellular location is the mitochondrion. It carries out the reaction L-proline + NADP(+) = (S)-1-pyrroline-5-carboxylate + NADPH + 2 H(+). The catalysed reaction is L-proline + NAD(+) = (S)-1-pyrroline-5-carboxylate + NADH + 2 H(+). Its pathway is amino-acid biosynthesis; L-proline biosynthesis; L-proline from L-glutamate 5-semialdehyde: step 1/1. In terms of biological role, oxidoreductase that catalyzes the last step in proline biosynthesis, which corresponds to the reduction of pyrroline-5-carboxylate to L-proline using NAD(P)H. At physiologic concentrations, has higher specific activity in the presence of NADH. Involved in cellular response to oxidative stress. In some cell types, such as erythrocytes, its primary function may be the generation of NADP(+). This is Pyrroline-5-carboxylate reductase 2 from Rattus norvegicus (Rat).